A 321-amino-acid polypeptide reads, in one-letter code: D-alanine--D-alanine ligase (321 aa).

Positions 121 to 315 (RIWFLTNNIN…FTNLIEEIIK (195 aa)) constitute an ATP-grasp domain. ATP is bound at residue 147 to 199 (PMKRPYVIKPLTQGSSIGVEVIFAEDDFNFADYDFPYGDQVIIEQYIKGRELQ). Mg(2+) is bound by residues Glu-268, Glu-282, and Asn-284.

This sequence belongs to the D-alanine--D-alanine ligase family. It depends on Mg(2+) as a cofactor. Mn(2+) serves as cofactor.

It localises to the cytoplasm. The enzyme catalyses 2 D-alanine + ATP = D-alanyl-D-alanine + ADP + phosphate + H(+). It participates in cell wall biogenesis; peptidoglycan biosynthesis. Functionally, cell wall formation. The polypeptide is D-alanine--D-alanine ligase (Rickettsia rickettsii (strain Iowa)).